A 207-amino-acid polypeptide reads, in one-letter code: Peptidyl-tRNA hydrolase (207 aa).

Residue Tyr17 participates in tRNA binding. His22 serves as the catalytic Proton acceptor. 3 residues coordinate tRNA: Phe68, Asn70, and Asn116.

Belongs to the PTH family. Monomer.

The protein localises to the cytoplasm. The enzyme catalyses an N-acyl-L-alpha-aminoacyl-tRNA + H2O = an N-acyl-L-amino acid + a tRNA + H(+). In terms of biological role, hydrolyzes ribosome-free peptidyl-tRNAs (with 1 or more amino acids incorporated), which drop off the ribosome during protein synthesis, or as a result of ribosome stalling. Functionally, catalyzes the release of premature peptidyl moieties from peptidyl-tRNA molecules trapped in stalled 50S ribosomal subunits, and thus maintains levels of free tRNAs and 50S ribosomes. In Buchnera aphidicola subsp. Baizongia pistaciae (strain Bp), this protein is Peptidyl-tRNA hydrolase.